The sequence spans 788 residues: Endonuclease MutS2 (788 aa).

335–342 (GPNTGGKT) is an ATP binding site. The disordered stretch occupies residues 688 to 708 (VKSASKTKKRSGGTSITKQSA). The span at 699 to 708 (GGTSITKQSA) shows a compositional bias: polar residues. One can recognise a Smr domain in the interval 713–788 (LDLRGVRVEE…GHGVTIIELK (76 aa)).

Belongs to the DNA mismatch repair MutS family. MutS2 subfamily. As to quaternary structure, homodimer. Binds to stalled ribosomes, contacting rRNA.

Its function is as follows. Endonuclease that is involved in the suppression of homologous recombination and thus may have a key role in the control of bacterial genetic diversity. Acts as a ribosome collision sensor, splitting the ribosome into its 2 subunits. Detects stalled/collided 70S ribosomes which it binds and splits by an ATP-hydrolysis driven conformational change. Acts upstream of the ribosome quality control system (RQC), a ribosome-associated complex that mediates the extraction of incompletely synthesized nascent chains from stalled ribosomes and their subsequent degradation. Probably generates substrates for RQC. This chain is Endonuclease MutS2, found in Exiguobacterium sibiricum (strain DSM 17290 / CCUG 55495 / CIP 109462 / JCM 13490 / 255-15).